Reading from the N-terminus, the 220-residue chain is MSAGDISAINIKSVKKNRRRKKRRTADVSSSDSSSSDPSSESEKEEIQNGAIEEHVGENGKSDHVFSKGNDEDKQEDIAIEVSDVELTDEESKDLKLNSKEVIDDLTKISLSKIPEPTKSQNKEGFMNASKIAENIKLAREEYNELAENFVPKGKDKTKLREEYLNLLFENYGDDINRLRAAPDFTNKSLSILADALQEGIGMFDIGELELVLKNKEMEN.

Residues 1–91 are disordered; that stretch reads MSAGDISAIN…VSDVELTDEE (91 aa). Residues 13–24 show a composition bias toward basic residues; the sequence is SVKKNRRRKKRR. Positions 29–39 are enriched in low complexity; sequence SSSDSSSSDPS. Over residues 41-72 the composition is skewed to basic and acidic residues; sequence ESEKEEIQNGAIEEHVGENGKSDHVFSKGNDE. Positions 73-91 are enriched in acidic residues; that stretch reads DKQEDIAIEVSDVELTDEE. Phosphoserine is present on Ser83. A Phosphothreonine modification is found at Thr88. The residue at position 99 (Ser99) is a Phosphoserine.

This sequence belongs to the RSA3 family. As to quaternary structure, associates with nucleolar pre-ribosomal particles. Interacts with DBP6. Together with DBP6, NOP8, URB1 and URB2, forms an RNA-independent complex, which is required during early maturation of nascent 60S ribosomal subunits.

Its subcellular location is the nucleus. The protein resides in the nucleolus. Functionally, required for efficient biogenesis of the 60S ribosomal subunit. This Saccharomyces cerevisiae (strain ATCC 204508 / S288c) (Baker's yeast) protein is Ribosome assembly protein 3 (RSA3).